Here is a 306-residue protein sequence, read N- to C-terminus: Agmatinase (306 aa).

6 residues coordinate Mn(2+): His126, Asp149, His151, Asp153, Asp230, and Asp232.

Belongs to the arginase family. Agmatinase subfamily. Mn(2+) serves as cofactor.

The enzyme catalyses agmatine + H2O = urea + putrescine. The protein operates within amine and polyamine biosynthesis; putrescine biosynthesis via agmatine pathway; putrescine from agmatine: step 1/1. Catalyzes the formation of putrescine from agmatine. The polypeptide is Agmatinase (Salmonella dublin (strain CT_02021853)).